Consider the following 308-residue polypeptide: Ribosomal RNA large subunit methyltransferase F (308 aa).

This sequence belongs to the methyltransferase superfamily. METTL16/RlmF family.

Its subcellular location is the cytoplasm. The catalysed reaction is adenosine(1618) in 23S rRNA + S-adenosyl-L-methionine = N(6)-methyladenosine(1618) in 23S rRNA + S-adenosyl-L-homocysteine + H(+). In terms of biological role, specifically methylates the adenine in position 1618 of 23S rRNA. The polypeptide is Ribosomal RNA large subunit methyltransferase F (Shigella flexneri serotype 5b (strain 8401)).